The chain runs to 610 residues: Propanediol dehydratase-reactivating factor large subunit (610 aa).

Residue 11–13 (NSS) coordinates ATP. Residues T105, D166, and D183 each coordinate Mg(2+). ATP-binding positions include 459-462 (EEIK), 557-558 (GS), and R591.

Belongs to the DdrA/PduG family. In terms of assembly, forms a heterotetramer PduG(2)/PduH(2). Mg(2+) serves as cofactor.

Its subcellular location is the bacterial microcompartment. It catalyses the reaction ATP + H2O = ADP + phosphate + H(+). It functions in the pathway polyol metabolism; 1,2-propanediol degradation. Large subunit of the propanediol dehydratase-reactivating factor (DDR), which reactivates suicidally inhibited adenosylcobalamin-dependent propanediol dehydratase (diol dehydratase, DDH) found in the bacterial microcompartment (BMC) dedicated to 1,2-propanediol (1,2-PD) degradation. Reactivates inactivated DDH in the presence of ATP, Mg(2+) and free adenosylcobalamin (AdoCbl), by mediating the exchange of the tightly bound damaged cofactor AdoCbl for a free intact one. This subunit contains the adenosine nucleotide binding site. Its function is as follows. Expression of a cosmid containing the full 21-gene pdu operon in E.coli allows E.coli to grow on 1,2-propanediol (1,2-PD) with the appearance of bacterial microcompartments (BMC) in its cytoplasm. In terms of biological role, the 1,2-PD-specific bacterial microcompartment (BMC) concentrates low levels of 1,2-PD catabolic enzymes, concentrates volatile reaction intermediates thus enhancing pathway flux and keeps the level of toxic, mutagenic propionaldehyde low. The chain is Propanediol dehydratase-reactivating factor large subunit from Citrobacter freundii.